The sequence spans 314 residues: Serine/threonine-protein phosphatase PP-Y (314 aa).

Asp-60, His-62, Asp-88, and Asn-120 together coordinate Mn(2+). The active-site Proton donor is His-121. Mn(2+)-binding residues include His-169 and His-244.

The protein belongs to the PPP phosphatase family. PP-Y subfamily. It depends on Mn(2+) as a cofactor.

It carries out the reaction O-phospho-L-seryl-[protein] + H2O = L-seryl-[protein] + phosphate. The enzyme catalyses O-phospho-L-threonyl-[protein] + H2O = L-threonyl-[protein] + phosphate. The protein is Serine/threonine-protein phosphatase PP-Y (PpY-55A) of Drosophila melanogaster (Fruit fly).